The following is a 191-amino-acid chain: 3-isopropylmalate dehydratase small subunit (191 aa).

It belongs to the LeuD family. LeuD type 1 subfamily. Heterodimer of LeuC and LeuD.

The catalysed reaction is (2R,3S)-3-isopropylmalate = (2S)-2-isopropylmalate. It participates in amino-acid biosynthesis; L-leucine biosynthesis; L-leucine from 3-methyl-2-oxobutanoate: step 2/4. Its function is as follows. Catalyzes the isomerization between 2-isopropylmalate and 3-isopropylmalate, via the formation of 2-isopropylmaleate. The chain is 3-isopropylmalate dehydratase small subunit from Staphylococcus saprophyticus subsp. saprophyticus (strain ATCC 15305 / DSM 20229 / NCIMB 8711 / NCTC 7292 / S-41).